We begin with the raw amino-acid sequence, 152 residues long: NADH-quinone oxidoreductase subunit A 2 (152 aa).

3 helical membrane passes run phenylalanine 8 to serine 28, phenylalanine 63 to tryptophan 83, and leucine 90 to valine 110.

Belongs to the complex I subunit 3 family. As to quaternary structure, NDH-1 is composed of 14 different subunits. Subunits NuoA, H, J, K, L, M, N constitute the membrane sector of the complex.

It localises to the cell inner membrane. The enzyme catalyses a quinone + NADH + 5 H(+)(in) = a quinol + NAD(+) + 4 H(+)(out). Its function is as follows. NDH-1 shuttles electrons from NADH, via FMN and iron-sulfur (Fe-S) centers, to quinones in the respiratory chain. The immediate electron acceptor for the enzyme in this species is believed to be a menaquinone. Couples the redox reaction to proton translocation (for every two electrons transferred, four hydrogen ions are translocated across the cytoplasmic membrane), and thus conserves the redox energy in a proton gradient. This is NADH-quinone oxidoreductase subunit A 2 from Chloroherpeton thalassium (strain ATCC 35110 / GB-78).